Consider the following 258-residue polypeptide: Acyl-[acyl-carrier-protein]--UDP-N-acetylglucosamine O-acyltransferase (258 aa).

Belongs to the transferase hexapeptide repeat family. LpxA subfamily. As to quaternary structure, homotrimer.

It is found in the cytoplasm. It catalyses the reaction a (3R)-hydroxyacyl-[ACP] + UDP-N-acetyl-alpha-D-glucosamine = a UDP-3-O-[(3R)-3-hydroxyacyl]-N-acetyl-alpha-D-glucosamine + holo-[ACP]. It participates in glycolipid biosynthesis; lipid IV(A) biosynthesis; lipid IV(A) from (3R)-3-hydroxytetradecanoyl-[acyl-carrier-protein] and UDP-N-acetyl-alpha-D-glucosamine: step 1/6. In terms of biological role, involved in the biosynthesis of lipid A, a phosphorylated glycolipid that anchors the lipopolysaccharide to the outer membrane of the cell. This chain is Acyl-[acyl-carrier-protein]--UDP-N-acetylglucosamine O-acyltransferase, found in Pseudomonas putida (strain ATCC 47054 / DSM 6125 / CFBP 8728 / NCIMB 11950 / KT2440).